A 177-amino-acid chain; its full sequence is Adenine phosphoribosyltransferase (177 aa).

This sequence belongs to the purine/pyrimidine phosphoribosyltransferase family. Homodimer.

It localises to the cytoplasm. The enzyme catalyses AMP + diphosphate = 5-phospho-alpha-D-ribose 1-diphosphate + adenine. It participates in purine metabolism; AMP biosynthesis via salvage pathway; AMP from adenine: step 1/1. In terms of biological role, catalyzes a salvage reaction resulting in the formation of AMP, that is energically less costly than de novo synthesis. In Idiomarina loihiensis (strain ATCC BAA-735 / DSM 15497 / L2-TR), this protein is Adenine phosphoribosyltransferase.